The following is a 603-amino-acid chain: Adenine deaminase (603 aa).

This sequence belongs to the metallo-dependent hydrolases superfamily. Adenine deaminase family. In terms of assembly, homodimer. Requires Mn(2+) as cofactor.

It carries out the reaction adenine + H2O + H(+) = hypoxanthine + NH4(+). This chain is Adenine deaminase, found in Klebsiella pneumoniae (strain 342).